Reading from the N-terminus, the 204-residue chain is Thymidylate kinase (204 aa).

An ATP-binding site is contributed by glycine 13–serine 20.

This sequence belongs to the thymidylate kinase family.

The enzyme catalyses dTMP + ATP = dTDP + ADP. Functionally, phosphorylation of dTMP to form dTDP in both de novo and salvage pathways of dTTP synthesis. The sequence is that of Thymidylate kinase from Leptospira interrogans serogroup Icterohaemorrhagiae serovar copenhageni (strain Fiocruz L1-130).